An 876-amino-acid chain; its full sequence is Leucine--tRNA ligase (876 aa).

A 'HIGH' region motif is present at residues 42–52; it reads PYPSGKLHMGH. The 'KMSKS' region motif lies at 634–638; that stretch reads KMSKS. Lysine 637 is a binding site for ATP.

It belongs to the class-I aminoacyl-tRNA synthetase family.

It localises to the cytoplasm. It carries out the reaction tRNA(Leu) + L-leucine + ATP = L-leucyl-tRNA(Leu) + AMP + diphosphate. This is Leucine--tRNA ligase from Neisseria gonorrhoeae (strain NCCP11945).